Here is a 224-residue protein sequence, read N- to C-terminus: Large ribosomal subunit protein uL4 (224 aa).

Residues 52–109 (AAARQGTHSTKTRGDVSGGGRKPYRQKGTGRARQGSTRTPQFTGGGVVHGPKPRDYSQ) are disordered.

The protein belongs to the universal ribosomal protein uL4 family. In terms of assembly, part of the 50S ribosomal subunit.

Functionally, one of the primary rRNA binding proteins, this protein initially binds near the 5'-end of the 23S rRNA. It is important during the early stages of 50S assembly. It makes multiple contacts with different domains of the 23S rRNA in the assembled 50S subunit and ribosome. Forms part of the polypeptide exit tunnel. This chain is Large ribosomal subunit protein uL4, found in Mycobacterium ulcerans (strain Agy99).